The following is a 438-amino-acid chain: 3-phosphoshikimate 1-carboxyvinyltransferase 1 (438 aa).

Positions 30, 31, and 35 each coordinate 3-phosphoshikimate. Lys30 is a phosphoenolpyruvate binding site. Phosphoenolpyruvate-binding residues include Gly104 and Arg132. The 3-phosphoshikimate site is built by Ser178, Ser179, Gln180, Ser207, Glu326, and His353. Residue Gln180 coordinates phosphoenolpyruvate. Residue Glu326 is the Proton acceptor of the active site. Positions 357, 398, and 423 each coordinate phosphoenolpyruvate.

Belongs to the EPSP synthase family. Monomer.

The protein localises to the cytoplasm. The enzyme catalyses 3-phosphoshikimate + phosphoenolpyruvate = 5-O-(1-carboxyvinyl)-3-phosphoshikimate + phosphate. The protein operates within metabolic intermediate biosynthesis; chorismate biosynthesis; chorismate from D-erythrose 4-phosphate and phosphoenolpyruvate: step 6/7. Catalyzes the transfer of the enolpyruvyl moiety of phosphoenolpyruvate (PEP) to the 5-hydroxyl of shikimate-3-phosphate (S3P) to produce enolpyruvyl shikimate-3-phosphate and inorganic phosphate. The polypeptide is 3-phosphoshikimate 1-carboxyvinyltransferase 1 (Streptomyces coelicolor (strain ATCC BAA-471 / A3(2) / M145)).